Consider the following 523-residue polypeptide: 2-isopropylmalate synthase (523 aa).

A Pyruvate carboxyltransferase domain is found at 5–267 (VIIFDTTLRD…HTNINHHEIW (263 aa)). Residues Asp14, His202, His204, and Asn238 each coordinate Mn(2+). Residues 392-523 (RLDYFSVQSG…QNKENNKETV (132 aa)) form a regulatory domain region.

Belongs to the alpha-IPM synthase/homocitrate synthase family. LeuA type 1 subfamily. Homodimer. Mn(2+) serves as cofactor.

Its subcellular location is the cytoplasm. It carries out the reaction 3-methyl-2-oxobutanoate + acetyl-CoA + H2O = (2S)-2-isopropylmalate + CoA + H(+). It participates in amino-acid biosynthesis; L-leucine biosynthesis; L-leucine from 3-methyl-2-oxobutanoate: step 1/4. In terms of biological role, catalyzes the condensation of the acetyl group of acetyl-CoA with 3-methyl-2-oxobutanoate (2-ketoisovalerate) to form 3-carboxy-3-hydroxy-4-methylpentanoate (2-isopropylmalate). This is 2-isopropylmalate synthase from Salmonella dublin (strain CT_02021853).